We begin with the raw amino-acid sequence, 103 residues long: Pyrimidine/purine nucleoside phosphorylase (103 aa).

The protein belongs to the nucleoside phosphorylase PpnP family.

The enzyme catalyses a purine D-ribonucleoside + phosphate = a purine nucleobase + alpha-D-ribose 1-phosphate. It carries out the reaction adenosine + phosphate = alpha-D-ribose 1-phosphate + adenine. It catalyses the reaction cytidine + phosphate = cytosine + alpha-D-ribose 1-phosphate. The catalysed reaction is guanosine + phosphate = alpha-D-ribose 1-phosphate + guanine. The enzyme catalyses inosine + phosphate = alpha-D-ribose 1-phosphate + hypoxanthine. It carries out the reaction thymidine + phosphate = 2-deoxy-alpha-D-ribose 1-phosphate + thymine. It catalyses the reaction uridine + phosphate = alpha-D-ribose 1-phosphate + uracil. The catalysed reaction is xanthosine + phosphate = alpha-D-ribose 1-phosphate + xanthine. Catalyzes the phosphorolysis of diverse nucleosides, yielding D-ribose 1-phosphate and the respective free bases. Can use uridine, adenosine, guanosine, cytidine, thymidine, inosine and xanthosine as substrates. Also catalyzes the reverse reactions. The protein is Pyrimidine/purine nucleoside phosphorylase of Methylococcus capsulatus (strain ATCC 33009 / NCIMB 11132 / Bath).